Consider the following 116-residue polypeptide: Ribonuclease P protein component (116 aa).

It belongs to the RnpA family. In terms of assembly, consists of a catalytic RNA component (M1 or rnpB) and a protein subunit.

It carries out the reaction Endonucleolytic cleavage of RNA, removing 5'-extranucleotides from tRNA precursor.. In terms of biological role, RNaseP catalyzes the removal of the 5'-leader sequence from pre-tRNA to produce the mature 5'-terminus. It can also cleave other RNA substrates such as 4.5S RNA. The protein component plays an auxiliary but essential role in vivo by binding to the 5'-leader sequence and broadening the substrate specificity of the ribozyme. This Geobacillus sp. (strain WCH70) protein is Ribonuclease P protein component.